The following is a 253-amino-acid chain: Imidazole glycerol phosphate synthase subunit HisF (253 aa).

Active-site residues include aspartate 11 and aspartate 130.

It belongs to the HisA/HisF family. Heterodimer of HisH and HisF.

The protein resides in the cytoplasm. The enzyme catalyses 5-[(5-phospho-1-deoxy-D-ribulos-1-ylimino)methylamino]-1-(5-phospho-beta-D-ribosyl)imidazole-4-carboxamide + L-glutamine = D-erythro-1-(imidazol-4-yl)glycerol 3-phosphate + 5-amino-1-(5-phospho-beta-D-ribosyl)imidazole-4-carboxamide + L-glutamate + H(+). Its pathway is amino-acid biosynthesis; L-histidine biosynthesis; L-histidine from 5-phospho-alpha-D-ribose 1-diphosphate: step 5/9. IGPS catalyzes the conversion of PRFAR and glutamine to IGP, AICAR and glutamate. The HisF subunit catalyzes the cyclization activity that produces IGP and AICAR from PRFAR using the ammonia provided by the HisH subunit. The chain is Imidazole glycerol phosphate synthase subunit HisF from Dehalococcoides mccartyi (strain CBDB1).